We begin with the raw amino-acid sequence, 238 residues long: D/L-lactic acid transporter (238 aa).

Helical transmembrane passes span 2 to 22 (VHQLIAEFMGTALMIIFGVGV) and 39 to 59 (IFAITTWGFGISVALFIFGNV). The NPA 1 motif lies at 62–64 (NPA). A run of 3 helical transmembrane segments spans residues 80–100 (FIPYSVAEVLGGVVGSVIVWI), 135–155 (FFVELFDTFIFISGILAISEI), and 158–178 (PGIVPIGVGLLVWAIGMGLGG). Positions 185 to 187 (NLA) match the NPA 2 motif. Residues 211–231 (YGIIVPGIAPFVGAAIAAWFM) form a helical membrane-spanning segment.

Belongs to the MIP/aquaporin (TC 1.A.8) family.

The protein resides in the cell membrane. Transporter that facilitates the transmembrane diffusion of D/L-lactic acid. Is involved in the cellular racemization of lactate and lactate metabolism. The transported molecule is indeed lactic acid and not the lactate anion, in agreement with the assumption that, with very few exceptions, MIPs (major intrinsic proteins) only facilitate the transport of uncharged solutes. Also facilitates urea and H(2)O(2) diffusion across membranes, but is not permeable to water, glycerol and dihydroxyacetone. The protein is D/L-lactic acid transporter of Lactiplantibacillus plantarum (strain ATCC BAA-793 / NCIMB 8826 / WCFS1) (Lactobacillus plantarum).